A 605-amino-acid polypeptide reads, in one-letter code: MSIPIRADQLRSRYLAFFSQKAHVVISGKSLVPEHDPTVLFTTAGMHPLVPYLMGEPHPAGTRLVNAQKCLRTGDIDAVGDNSHLTFFEMLGNWSLGDYFKEEAIAFSFEFLTGAPWLGISPDRLSVTVFAGDEAVARDEESAAIWERLGIARTHIHFLPRADNWWGPTGETGPCGPDTEIFFDTGVPPCSVSCRPGCSCGKYVEIWNDVFMQYRKDADGRYRPLERYCVDTGMGIERTVAVLQGKRSVYDTEIFTPLLERIGQLCGKRYGCQGAHDVSMRIVCDHIRAATFILGDPVPVRPSNVGAGYVLRRIIRRSVRHGRKLGIDGEFLSSLARVVIGQYAAVYPELEEKATCIAQELANEERKFLDALRKGEAEYERMIPKFLQGTEREIPGSVAFRLYDTYGFPLELTEELARESGLRVDRAGFDTAFQAHQACSRIGAQRVFKGGLADHSAETTAYHTATHLLHQALRVVLGTHVQQKGSNITAERLRFDFSHPRPMSAQEKVQVEQLVNEQIRADLPVCCEVMSLEDAMNSGAVALFGEKYESTVKVYSIGTFSREVCGGPHVARTGQLGRFSIQKEQSSAAGVRRIRAILEKSGEKS.

Zn(2+) contacts are provided by H463, H467, C565, and H569.

This sequence belongs to the class-II aminoacyl-tRNA synthetase family. The cofactor is Zn(2+).

It is found in the cytoplasm. It carries out the reaction tRNA(Ala) + L-alanine + ATP = L-alanyl-tRNA(Ala) + AMP + diphosphate. Functionally, catalyzes the attachment of alanine to tRNA(Ala) in a two-step reaction: alanine is first activated by ATP to form Ala-AMP and then transferred to the acceptor end of tRNA(Ala). Also edits incorrectly charged Ser-tRNA(Ala) and Gly-tRNA(Ala) via its editing domain. The chain is Alanine--tRNA ligase (alaS) from Treponema pallidum (strain Nichols).